We begin with the raw amino-acid sequence, 78 residues long: Teretoxin Tsu6.15 (78 aa).

The first 21 residues, 1–21 (MATSGRLLCFCLVLGLVFESL), serve as a signal peptide directing secretion. Residues 22-47 (GYSEARPPRDRKRTVTAKRYDPLAQR) constitute a propeptide that is removed on maturation.

It belongs to the teretoxin M (TM) superfamily. Post-translationally, contains 3 disulfide bonds. Expressed by the venom duct.

It is found in the secreted. This chain is Teretoxin Tsu6.15, found in Terebra subulata (Chocolate spotted auger).